Here is a 908-residue protein sequence, read N- to C-terminus: Magnesium-transporting ATPase, P-type 1 (908 aa).

A compositionally biased stretch (basic and acidic residues) spans 1 to 20 (MTDMNIENRKLNRPASENDK). The disordered stretch occupies residues 1-21 (MTDMNIENRKLNRPASENDKQ). The Cytoplasmic portion of the chain corresponds to 1–80 (MTDMNIENRK…QVPPALIQLL (80 aa)). A helical membrane pass occupies residues 81 to 101 (QAFNNPFIYVLMALAGVSFIT). Residues 102 to 113 (DYWLPLRRGEET) are Extracellular-facing. Residues 114–134 (DLTGVLIILTMVSLSGLLRFW) form a helical membrane-spanning segment. Residues 135-293 (QEFRTNRAAQ…QTAFDRGVNS (159 aa)) lie on the Cytoplasmic side of the membrane. Residues 294–314 (VSWLLIRFMLIMVPVVLLING) traverse the membrane as a helical segment. The Extracellular portion of the chain corresponds to 315-323 (FSKGDWVEA). A helical transmembrane segment spans residues 324-341 (SLFALAVAVGLTPEMLPM). E337 contributes to the Mg(2+) binding site. Topologically, residues 342–704 (IVSSNLAKGA…IKGRETFGNI (363 aa)) are cytoplasmic. Catalysis depends on D379, which acts as the 4-aspartylphosphate intermediate. Mg(2+)-binding residues include D650, D654, and N718. The helical transmembrane segment at 705-724 (IKYLNMTASSNFGNVFSVLV) threads the bilayer. Topologically, residues 725-733 (ASAFIPFLP) are extracellular. The helical transmembrane segment at 734–753 (MLAIHLLIQNLMYDISQLSL) threads the bilayer. Mg(2+) is bound by residues N743 and D747. At 754–775 (PWDKMDKEFLRKPRKWDAKNIG) the chain is on the cytoplasmic side. The chain crosses the membrane as a helical span at residues 776 to 799 (RFMLWIGPTSSIFDITTFALMWYV). Topologically, residues 800 to 808 (FAANNVEAQ) are extracellular. The helical transmembrane segment at 809-827 (ALFQSGWFIEGLLSQTLVV) threads the bilayer. Residues 828–840 (HMLRTQKIPFIQS) are Cytoplasmic-facing. Residues 841-860 (RATLPVLLTTGLIMAIGIYI) traverse the membrane as a helical segment. Residues 861–875 (PFSPLGAMVGLEPLP) lie on the Extracellular side of the membrane. A helical membrane pass occupies residues 876–895 (LSYFPWLVATLLSYCLVAQG). The Cytoplasmic portion of the chain corresponds to 896–908 (MKRFYIKRFGQWF).

The protein belongs to the cation transport ATPase (P-type) (TC 3.A.3) family. Type IIIB subfamily.

Its subcellular location is the cell inner membrane. The enzyme catalyses Mg(2+)(out) + ATP + H2O = Mg(2+)(in) + ADP + phosphate + H(+). Functionally, mediates magnesium influx to the cytosol. This is Magnesium-transporting ATPase, P-type 1 (mgtB) from Salmonella typhimurium (strain LT2 / SGSC1412 / ATCC 700720).